Here is an 840-residue protein sequence, read N- to C-terminus: 9-beta-pimara-7,15-diene synthase, chloroplastic (840 aa).

A chloroplast-targeting transit peptide spans 1–56 (MASPMEAVARSSLVLAPRRRRALGLLPAAAAPFVLDCRRRHNGGMRRPHVSFACSA). Mg(2+)-binding residues include aspartate 589, aspartate 593, asparagine 733, serine 737, and glutamate 741. The DDXXD motif motif lies at 589–593 (DDFFD).

It belongs to the terpene synthase family. It depends on Mg(2+) as a cofactor.

The protein localises to the plastid. The protein resides in the chloroplast. The enzyme catalyses 9alpha-copalyl diphosphate = 9beta-pimara-7,15-diene + diphosphate. Involved in the biosynthesis of momilactone A and B phytoalexins. Catalyzes the conversion of syn-copalyl diphosphate to the phytoalexin precursor syn-pimara-7,15-diene. The protein is 9-beta-pimara-7,15-diene synthase, chloroplastic of Oryza sativa subsp. indica (Rice).